The primary structure comprises 1388 residues: DNA-directed RNA polymerase subunit beta (1388 aa).

Belongs to the RNA polymerase beta chain family. In terms of assembly, the RNAP catalytic core consists of 2 alpha, 1 beta, 1 beta' and 1 omega subunit. When a sigma factor is associated with the core the holoenzyme is formed, which can initiate transcription.

The enzyme catalyses RNA(n) + a ribonucleoside 5'-triphosphate = RNA(n+1) + diphosphate. DNA-dependent RNA polymerase catalyzes the transcription of DNA into RNA using the four ribonucleoside triphosphates as substrates. This Xylella fastidiosa (strain Temecula1 / ATCC 700964) protein is DNA-directed RNA polymerase subunit beta.